We begin with the raw amino-acid sequence, 226 residues long: Urease accessory protein UreF (226 aa).

It belongs to the UreF family. In terms of assembly, ureD, UreF and UreG form a complex that acts as a GTP-hydrolysis-dependent molecular chaperone, activating the urease apoprotein by helping to assemble the nickel containing metallocenter of UreC. The UreE protein probably delivers the nickel.

The protein localises to the cytoplasm. Functionally, required for maturation of urease via the functional incorporation of the urease nickel metallocenter. This chain is Urease accessory protein UreF, found in Burkholderia lata (strain ATCC 17760 / DSM 23089 / LMG 22485 / NCIMB 9086 / R18194 / 383).